A 193-amino-acid chain; its full sequence is Large ribosomal subunit protein bL9 (193 aa).

Residues 155 to 193 form a disordered region; the sequence is AEGETLTSAEAIYDIQEKPLAENQEEMNDNDANSINEQA. Positions 184 to 193 are enriched in polar residues; that stretch reads NDANSINEQA.

It belongs to the bacterial ribosomal protein bL9 family.

In terms of biological role, binds to the 23S rRNA. This Bartonella quintana (strain Toulouse) (Rochalimaea quintana) protein is Large ribosomal subunit protein bL9.